The chain runs to 248 residues: Leucyl/phenylalanyl-tRNA--protein transferase (248 aa).

This sequence belongs to the L/F-transferase family.

It is found in the cytoplasm. The catalysed reaction is N-terminal L-lysyl-[protein] + L-leucyl-tRNA(Leu) = N-terminal L-leucyl-L-lysyl-[protein] + tRNA(Leu) + H(+). It catalyses the reaction N-terminal L-arginyl-[protein] + L-leucyl-tRNA(Leu) = N-terminal L-leucyl-L-arginyl-[protein] + tRNA(Leu) + H(+). It carries out the reaction L-phenylalanyl-tRNA(Phe) + an N-terminal L-alpha-aminoacyl-[protein] = an N-terminal L-phenylalanyl-L-alpha-aminoacyl-[protein] + tRNA(Phe). Functionally, functions in the N-end rule pathway of protein degradation where it conjugates Leu, Phe and, less efficiently, Met from aminoacyl-tRNAs to the N-termini of proteins containing an N-terminal arginine or lysine. The protein is Leucyl/phenylalanyl-tRNA--protein transferase of Rhizorhabdus wittichii (strain DSM 6014 / CCUG 31198 / JCM 15750 / NBRC 105917 / EY 4224 / RW1) (Sphingomonas wittichii).